Here is a 194-residue protein sequence, read N- to C-terminus: Ancillary SecYEG translocon subunit (194 aa).

The Cytoplasmic portion of the chain corresponds to 1-10 (MHLNKMKKVS). A helical membrane pass occupies residues 11–31 (LKTYLVLFFLIFFIFCSFWFI). The Periplasmic segment spans residues 32-194 (KPKEKKLKLE…INMKINEIKR (163 aa)).

The protein belongs to the YfgM family. Interacts with the SecYEG translocon. Forms a complex with PpiD.

Its subcellular location is the cell inner membrane. Functionally, may mediate protein transfer from the SecYEG translocon to the periplasmic chaperone network via its periplasmic C-terminal region. The polypeptide is Ancillary SecYEG translocon subunit (Buchnera aphidicola subsp. Schizaphis graminum (strain Sg)).